We begin with the raw amino-acid sequence, 180 residues long: ATP-dependent protease subunit HslV (180 aa).

T2 is a catalytic residue. Na(+)-binding residues include G158, C161, and T164.

Belongs to the peptidase T1B family. HslV subfamily. A double ring-shaped homohexamer of HslV is capped on each side by a ring-shaped HslU homohexamer. The assembly of the HslU/HslV complex is dependent on binding of ATP.

Its subcellular location is the cytoplasm. The enzyme catalyses ATP-dependent cleavage of peptide bonds with broad specificity.. Its activity is regulated as follows. Allosterically activated by HslU binding. Protease subunit of a proteasome-like degradation complex believed to be a general protein degrading machinery. The sequence is that of ATP-dependent protease subunit HslV from Baumannia cicadellinicola subsp. Homalodisca coagulata.